A 307-amino-acid chain; its full sequence is G-protein coupled receptor 35 (307 aa).

Residues 1–18 (MNSTTCNSTLTWPASVNN) are Extracellular-facing. Residues Asn2 and Asn7 are each glycosylated (N-linked (GlcNAc...) asparagine). Residues 19-39 (FFIIYSALLLVLGLLLNSVAL) form a helical membrane-spanning segment. Residues 40–53 (WVFCYRMHQWTETR) are Cytoplasmic-facing. The helical transmembrane segment at 54–74 (IYMTNLAVADLCLLCSLPFVL) threads the bilayer. Residues 75-88 (YSLKYSSSDTPVCQ) lie on the Extracellular side of the membrane. Cys87 and Cys160 are disulfide-bonded. A helical transmembrane segment spans residues 89–110 (LSQGIYLANRYMSISLVTAIAV). Topologically, residues 111–129 (DRYVAVRHPLRARELRSPR) are cytoplasmic. The chain crosses the membrane as a helical span at residues 130-150 (QAAAVCVALWVIVVTSLVVRW). Residues 151-176 (RLGMQEGGFCFSSQTRRNFSTTAFSL) lie on the Extracellular side of the membrane. Residues 177-197 (LGFYLPLAIVVFCSLQVVTVL) form a helical membrane-spanning segment. The Cytoplasmic portion of the chain corresponds to 198-217 (SRRPAADVGQAEATQKATHM). The helical transmembrane segment at 218–238 (VWANLAVFVICFLPLHVVLTV) threads the bilayer. Over 239–257 (QVSLNLNTCAARDTFSRAL) the chain is Extracellular. A helical transmembrane segment spans residues 258–278 (SITGKLSDTNCCLDAICYYYM). The Cytoplasmic segment spans residues 279 to 307 (AREFQEASKPATSSNTPHKSQDSQILSLT). Phosphoserine occurs at positions 286, 292, 298, and 301. A disordered region spans residues 288-307 (PATSSNTPHKSQDSQILSLT).

This sequence belongs to the G-protein coupled receptor 1 family. Multiply phosphorylated in clusters of serines and threonines in the C-terminal tail. Phosphorylation of Ser-298 and Ser-301 is mediated by GRK5 and/or GRK6. As to expression, predominantly expressed in immune and gastrointestinal tissues. Strongly GPR35 expressed in colonic macrophages.

It is found in the cell membrane. In terms of biological role, G-protein coupled receptor that binds to several ligands including the tryptophan metabolite kynurenic acid (KYNA), lysophosphatidic acid (LPA) or 5-hydroxyindoleacetic acid (5-HIAA) with high affinity, leading to rapid and transient activation of numerous intracellular signaling pathways. Plays a role in neutrophil recruitment to sites of inflammation and bacterial clearance through the major serotonin metabolite 5-HIAA that acts as a physiological ligand. Stimulates lipid metabolism, thermogenic, and anti-inflammatory gene expression in adipose tissue once activated by kynurenic acid. In macrophages, activation by lysophosphatidic acid promotes GPR35-induced signaling with a distinct transcriptional profile characterized by TNF production associated with ERK and NF-kappa-B activation. In turn, induces chemotaxis of macrophages. The chain is G-protein coupled receptor 35 (Gpr35) from Mus musculus (Mouse).